A 141-amino-acid chain; its full sequence is Large ribosomal subunit protein uL22 (141 aa).

Residues 108 to 141 form a disordered region; sequence KSEEKKTVAKKTTTTKAPAKKTTSTKKATVKKES. The span at 117-134 shows a compositional bias: low complexity; that stretch reads KKTTTTKAPAKKTTSTKK.

The protein belongs to the universal ribosomal protein uL22 family. In terms of assembly, part of the 50S ribosomal subunit.

This protein binds specifically to 23S rRNA; its binding is stimulated by other ribosomal proteins, e.g. L4, L17, and L20. It is important during the early stages of 50S assembly. It makes multiple contacts with different domains of the 23S rRNA in the assembled 50S subunit and ribosome. In terms of biological role, the globular domain of the protein is located near the polypeptide exit tunnel on the outside of the subunit, while an extended beta-hairpin is found that lines the wall of the exit tunnel in the center of the 70S ribosome. This Campylobacter jejuni subsp. jejuni serotype O:2 (strain ATCC 700819 / NCTC 11168) protein is Large ribosomal subunit protein uL22.